The following is a 333-amino-acid chain: Glycerol-3-phosphate dehydrogenase [NAD(P)+] (333 aa).

NADPH contacts are provided by serine 13, tyrosine 14, arginine 34, and lysine 108. Residues lysine 108, glycine 137, and threonine 139 each coordinate sn-glycerol 3-phosphate. An NADPH-binding site is contributed by alanine 141. Sn-glycerol 3-phosphate is bound by residues lysine 193, aspartate 246, serine 256, arginine 257, and asparagine 258. Catalysis depends on lysine 193, which acts as the Proton acceptor. NADPH is bound at residue arginine 257. NADPH is bound at residue glutamate 283.

The protein belongs to the NAD-dependent glycerol-3-phosphate dehydrogenase family.

The protein resides in the cytoplasm. It catalyses the reaction sn-glycerol 3-phosphate + NAD(+) = dihydroxyacetone phosphate + NADH + H(+). The enzyme catalyses sn-glycerol 3-phosphate + NADP(+) = dihydroxyacetone phosphate + NADPH + H(+). Its pathway is membrane lipid metabolism; glycerophospholipid metabolism. Functionally, catalyzes the reduction of the glycolytic intermediate dihydroxyacetone phosphate (DHAP) to sn-glycerol 3-phosphate (G3P), the key precursor for phospholipid synthesis. This Idiomarina loihiensis (strain ATCC BAA-735 / DSM 15497 / L2-TR) protein is Glycerol-3-phosphate dehydrogenase [NAD(P)+].